We begin with the raw amino-acid sequence, 441 residues long: ATP-dependent RNA helicase sub2 (441 aa).

Over residues 19–29 (DAAATTAAPAA) the composition is skewed to low complexity. The interval 19–43 (DAAATTAAPAANGAQDKKGDLTVSG) is disordered. A Q motif motif is present at residues 58–86 (TGFRDFLLKGELLRAITDCGFEHPSEVQQ). The Helicase ATP-binding domain maps to 89 to 264 (IPTAILNVDV…KKFMRNPLEV (176 aa)). 102–109 (AKSGLGKT) contributes to the ATP binding site. Positions 211-214 (DECD) match the DEAD box motif. In terms of domain architecture, Helicase C-terminal spans 276 to 437 (GLQQYYIKLS…EYPEGGVDSS (162 aa)).

This sequence belongs to the DEAD box helicase family. DECD subfamily.

The protein localises to the nucleus. It catalyses the reaction ATP + H2O = ADP + phosphate + H(+). In terms of biological role, ATP-binding RNA helicase involved in transcription elongation and required for the export of mRNA out of the nucleus. SUB2 also plays a role in pre-mRNA splicing and spliceosome assembly. May be involved in rDNA and telomeric silencing, and maintenance of genome integrity. The polypeptide is ATP-dependent RNA helicase sub2 (sub2) (Aspergillus clavatus (strain ATCC 1007 / CBS 513.65 / DSM 816 / NCTC 3887 / NRRL 1 / QM 1276 / 107)).